Reading from the N-terminus, the 209-residue chain is 3-dehydroquinate dehydratase (209 aa).

3-dehydroquinate-binding positions include Ser-6, Glu-25–Arg-27, and Arg-55. The active-site Proton donor/acceptor is the His-109. Lys-134 acts as the Schiff-base intermediate with substrate in catalysis. Arg-172 and Gln-195 together coordinate 3-dehydroquinate.

This sequence belongs to the type-I 3-dehydroquinase family. Homodimer.

The enzyme catalyses 3-dehydroquinate = 3-dehydroshikimate + H2O. It participates in metabolic intermediate biosynthesis; chorismate biosynthesis; chorismate from D-erythrose 4-phosphate and phosphoenolpyruvate: step 3/7. Involved in the third step of the chorismate pathway, which leads to the biosynthesis of aromatic amino acids. Catalyzes the cis-dehydration of 3-dehydroquinate (DHQ) and introduces the first double bond of the aromatic ring to yield 3-dehydroshikimate. The chain is 3-dehydroquinate dehydratase from Methanoregula boonei (strain DSM 21154 / JCM 14090 / 6A8).